We begin with the raw amino-acid sequence, 319 residues long: Acetaldehyde dehydrogenase 1 (319 aa).

C129 serves as the catalytic Acyl-thioester intermediate. NAD(+) is bound by residues S160–N168 and N287.

Belongs to the acetaldehyde dehydrogenase family.

The enzyme catalyses acetaldehyde + NAD(+) + CoA = acetyl-CoA + NADH + H(+). In Burkholderia lata (strain ATCC 17760 / DSM 23089 / LMG 22485 / NCIMB 9086 / R18194 / 383), this protein is Acetaldehyde dehydrogenase 1.